The sequence spans 1391 residues: DNA-directed RNA polymerase subunit beta' (1391 aa).

Zn(2+)-binding residues include Cys72, Cys74, Cys87, and Cys90. 3 residues coordinate Mg(2+): Asp462, Asp464, and Asp466. Positions 816, 890, 897, and 900 each coordinate Zn(2+).

Belongs to the RNA polymerase beta' chain family. The RNAP catalytic core consists of 2 alpha, 1 beta, 1 beta' and 1 omega subunit. When a sigma factor is associated with the core the holoenzyme is formed, which can initiate transcription. Mg(2+) is required as a cofactor. It depends on Zn(2+) as a cofactor.

The catalysed reaction is RNA(n) + a ribonucleoside 5'-triphosphate = RNA(n+1) + diphosphate. Functionally, DNA-dependent RNA polymerase catalyzes the transcription of DNA into RNA using the four ribonucleoside triphosphates as substrates. This Neisseria meningitidis serogroup B (strain ATCC BAA-335 / MC58) protein is DNA-directed RNA polymerase subunit beta'.